The following is a 228-amino-acid chain: Cytidylate kinase (228 aa).

Gly-17–Thr-25 contacts ATP.

It belongs to the cytidylate kinase family. Type 1 subfamily.

The protein localises to the cytoplasm. The catalysed reaction is CMP + ATP = CDP + ADP. The enzyme catalyses dCMP + ATP = dCDP + ADP. This chain is Cytidylate kinase, found in Burkholderia pseudomallei (strain 1106a).